The chain runs to 141 residues: UPF0310 protein Mflv_0785 (141 aa).

It belongs to the UPF0310 family.

The polypeptide is UPF0310 protein Mflv_0785 (Mycolicibacterium gilvum (strain PYR-GCK) (Mycobacterium gilvum (strain PYR-GCK))).